The chain runs to 596 residues: Cytochrome P450 monooxygenase FUM15 (596 aa).

The interval 476 to 512 is disordered; it reads DRWLSPKNGNREATEQSKFKIGNQKRDSTAAPEVTQE. Positions 484-503 are enriched in basic and acidic residues; it reads GNREATEQSKFKIGNQKRDS. Residue cysteine 536 participates in heme binding.

It belongs to the cytochrome P450 family. Requires heme as cofactor.

The protein resides in the endoplasmic reticulum. It participates in secondary metabolite biosynthesis. Functionally, cytochrome P450 monooxygenase; part of the gene cluster that mediates the biosynthesis of fumonisins B1 (FB1), B2 (FB2), B3 (FB3), and B4 (FB4), which are carcinogenic mycotoxins. Within the pathway, FUM15 may be responsible for the hydroxylations at positions C-14 and/or C-15. Also plays a role in self-protection from FB1 toxicity, probably through derivatization of FB1, and may contribute to ceramide biosynthesis. The biosynthesis starts with the FUM1-catalyzed carbon chain assembly from one molecule of acetyl-CoA, eight molecules of malonyl-CoA, and two molecules of methionine (in S-adenosyl form). The C18 polyketide chain is released from the enzyme by a nucleophilic attack of a carbanion, which is derived from R-carbon of alanine by decarboxylation, on the carbonyl carbon of polyketide acyl chain. This step is catalyzed by the pyridoxal 5'-phosphate-dependent aminoacyl transferase FUM8. The resultant 3-keto intermediate is then stereospecifically reduced to a 3-hydroxyl product by reductase FUM13. Subsequent oxidations at C-10 by the cytochrome P450 monooxygenase FUM2, C-14 and C-15 by FUM6, FUM12 or FUM15, tricarballylic esterification of the hydroxyl groups on C-14 and C-15 by acyltransferase FUM14, and C-5 hydroxylation by 2-keto-glutarate-dependent dioxygenase FUM3 furnish the biosynthesis of fumonisins. The tricarballylic moieties are most likely derived from the citric acid cycle, and their addition to the carbon backbone may involve FUM7, FUM10, FUM11 and FUM14. In Gibberella moniliformis (strain M3125 / FGSC 7600) (Maize ear and stalk rot fungus), this protein is Cytochrome P450 monooxygenase FUM15.